The sequence spans 732 residues: Catalase-peroxidase (732 aa).

The tract at residues 1–26 (MDAKTDDQGGKCPFPHGGGSRGHRNR) is disordered. The segment at residues 97–219 (WHSAGTYRTT…LGAVQMGLIY (123 aa)) is a cross-link (tryptophyl-tyrosyl-methioninium (Trp-Tyr) (with M-245)). The active-site Proton acceptor is the His98. Residues 219-245 (YVNPEGPNGNPDPVAAAKDIRETFARM) constitute a cross-link (tryptophyl-tyrosyl-methioninium (Tyr-Met) (with W-97)). Residue His260 participates in heme b binding.

This sequence belongs to the peroxidase family. Peroxidase/catalase subfamily. As to quaternary structure, homodimer or homotetramer. It depends on heme b as a cofactor. Formation of the three residue Trp-Tyr-Met cross-link is important for the catalase, but not the peroxidase activity of the enzyme.

It carries out the reaction H2O2 + AH2 = A + 2 H2O. The enzyme catalyses 2 H2O2 = O2 + 2 H2O. Bifunctional enzyme with both catalase and broad-spectrum peroxidase activity. This Rhodopseudomonas palustris (strain BisB5) protein is Catalase-peroxidase.